Here is a 228-residue protein sequence, read N- to C-terminus: UPF0502 protein AZOSEA09860 (228 aa).

Belongs to the UPF0502 family.

This Aromatoleum aromaticum (strain DSM 19018 / LMG 30748 / EbN1) (Azoarcus sp. (strain EbN1)) protein is UPF0502 protein AZOSEA09860.